Reading from the N-terminus, the 140-residue chain is Large ribosomal subunit protein bL17 (140 aa).

The interval 119–140 (DTTAKGQDSGPVQVEEQENEEA) is disordered.

The protein belongs to the bacterial ribosomal protein bL17 family. In terms of assembly, part of the 50S ribosomal subunit. Contacts protein L32.

The protein is Large ribosomal subunit protein bL17 of Zymomonas mobilis subsp. mobilis (strain ATCC 31821 / ZM4 / CP4).